A 174-amino-acid chain; its full sequence is Ubiquitin-like protein 4B (174 aa).

One can recognise a Ubiquitin-like domain in the interval 1–76; it reads MFLTVKLLLG…INVIMQPLEK (76 aa). Residues 141 to 156 show a composition bias toward basic and acidic residues; the sequence is EPHVEPAGERELEAKA. The segment at 141–174 is disordered; it reads EPHVEPAGERELEAKARPQSSCDMEEKEEAAADQ. Residues 163–174 are compositionally biased toward acidic residues; that stretch reads DMEEKEEAAADQ.

The protein localises to the cytoplasm. This Homo sapiens (Human) protein is Ubiquitin-like protein 4B (UBL4B).